The chain runs to 253 residues: Imidazole glycerol phosphate synthase subunit HisF (253 aa).

Active-site residues include D11 and D130.

This sequence belongs to the HisA/HisF family. As to quaternary structure, heterodimer of HisH and HisF.

It is found in the cytoplasm. The catalysed reaction is 5-[(5-phospho-1-deoxy-D-ribulos-1-ylimino)methylamino]-1-(5-phospho-beta-D-ribosyl)imidazole-4-carboxamide + L-glutamine = D-erythro-1-(imidazol-4-yl)glycerol 3-phosphate + 5-amino-1-(5-phospho-beta-D-ribosyl)imidazole-4-carboxamide + L-glutamate + H(+). The protein operates within amino-acid biosynthesis; L-histidine biosynthesis; L-histidine from 5-phospho-alpha-D-ribose 1-diphosphate: step 5/9. Functionally, IGPS catalyzes the conversion of PRFAR and glutamine to IGP, AICAR and glutamate. The HisF subunit catalyzes the cyclization activity that produces IGP and AICAR from PRFAR using the ammonia provided by the HisH subunit. This Dehalococcoides mccartyi (strain ATCC BAA-2100 / JCM 16839 / KCTC 5957 / BAV1) protein is Imidazole glycerol phosphate synthase subunit HisF.